The primary structure comprises 426 residues: Serine hydroxymethyltransferase (426 aa).

(6S)-5,6,7,8-tetrahydrofolate contacts are provided by residues L121 and 125 to 127; that span reads GHL. K230 carries the N6-(pyridoxal phosphate)lysine modification. Position 354-356 (354-356) interacts with (6S)-5,6,7,8-tetrahydrofolate; the sequence is SPF.

The protein belongs to the SHMT family. In terms of assembly, homodimer. It depends on pyridoxal 5'-phosphate as a cofactor.

It localises to the cytoplasm. The enzyme catalyses (6R)-5,10-methylene-5,6,7,8-tetrahydrofolate + glycine + H2O = (6S)-5,6,7,8-tetrahydrofolate + L-serine. The protein operates within one-carbon metabolism; tetrahydrofolate interconversion. It functions in the pathway amino-acid biosynthesis; glycine biosynthesis; glycine from L-serine: step 1/1. Catalyzes the reversible interconversion of serine and glycine with tetrahydrofolate (THF) serving as the one-carbon carrier. This reaction serves as the major source of one-carbon groups required for the biosynthesis of purines, thymidylate, methionine, and other important biomolecules. Also exhibits THF-independent aldolase activity toward beta-hydroxyamino acids, producing glycine and aldehydes, via a retro-aldol mechanism. In Acaryochloris marina (strain MBIC 11017), this protein is Serine hydroxymethyltransferase.